Reading from the N-terminus, the 101-residue chain is NADH-quinone oxidoreductase subunit K (101 aa).

3 consecutive transmembrane segments (helical) span residues 4–24 (LAHF…GIFL), 30–50 (IVLL…FVAF), and 61–81 (VFVF…LAIL).

Belongs to the complex I subunit 4L family. In terms of assembly, NDH-1 is composed of 14 different subunits. Subunits NuoA, H, J, K, L, M, N constitute the membrane sector of the complex.

The protein localises to the cell inner membrane. It catalyses the reaction a quinone + NADH + 5 H(+)(in) = a quinol + NAD(+) + 4 H(+)(out). In terms of biological role, NDH-1 shuttles electrons from NADH, via FMN and iron-sulfur (Fe-S) centers, to quinones in the respiratory chain. The immediate electron acceptor for the enzyme in this species is believed to be ubiquinone. Couples the redox reaction to proton translocation (for every two electrons transferred, four hydrogen ions are translocated across the cytoplasmic membrane), and thus conserves the redox energy in a proton gradient. The sequence is that of NADH-quinone oxidoreductase subunit K from Cupriavidus pinatubonensis (strain JMP 134 / LMG 1197) (Cupriavidus necator (strain JMP 134)).